The following is a 725-amino-acid chain: Portal protein (725 aa).

This sequence belongs to the p22likevirus portal protein family. Homododecamer. Interacts with the terminase large subunit; this interaction allows the packaging of viral DNA. Interacts (via C-terminus) with the head-to-tail adapter protein gp4; this interaction participates in the head completion. Interacts with the scaffolding protein; this interaction initiates procapsid assembly, thereby ensuring incorporation of only one portal ring per capsid. Interacts with the capsid protein.

Its subcellular location is the virion. Forms the portal vertex of the capsid. This portal plays critical roles in head assembly, genome packaging, neck/tail attachment, and genome ejection. Procapsid assembly may initiate with a nucleation complex composed of portal and scaffolding proteins. The portal protein multimerizes as a single ring-shaped homododecamer arranged around a central channel. Switches upon genome packaging from an asymmetrical conformation in the procapsid (PC-portal) to a symmetrical ring in the mature capsid (MV-portal). This change of conformation may serve as a signal for headful packaging. The polypeptide is Portal protein (1) (Salmonella typhimurium (Bacteriophage P22)).